The sequence spans 307 residues: Ribosomal protein L11 methyltransferase (307 aa).

Positions 162, 183, 205, and 244 each coordinate S-adenosyl-L-methionine.

The protein belongs to the methyltransferase superfamily. PrmA family.

It localises to the cytoplasm. It catalyses the reaction L-lysyl-[protein] + 3 S-adenosyl-L-methionine = N(6),N(6),N(6)-trimethyl-L-lysyl-[protein] + 3 S-adenosyl-L-homocysteine + 3 H(+). Methylates ribosomal protein L11. This is Ribosomal protein L11 methyltransferase from Bordetella parapertussis (strain 12822 / ATCC BAA-587 / NCTC 13253).